Consider the following 314-residue polypeptide: Calcium homeostasis modulator protein 4 (314 aa).

Topologically, residues Met-1 to Arg-14 are cytoplasmic. Residues Asn-15–Ser-37 traverse the membrane as a helical segment. The Extracellular segment spans residues Thr-38–Asn-48. Intrachain disulfides connect Cys-41–Cys-131 and Cys-43–Cys-162. The chain crosses the membrane as a helical span at residues Phe-49–Arg-71. Topologically, residues Ser-72–Arg-103 are cytoplasmic. A helical transmembrane segment spans residues Phe-104–Tyr-129. The Extracellular portion of the chain corresponds to Glu-130 to Tyr-183. Residues Gln-184–Ala-207 traverse the membrane as a helical segment. The Cytoplasmic segment spans residues Lys-208 to Pro-314.

Belongs to the CALHM family. In terms of assembly, oligomerizes to form decameric and undecameric channels. Two hemichannels can assemble in a tail-to-tail manner to form a gap junction. As to expression, placenta.

It localises to the cell membrane. May assemble to form gap junction channel-like structures involved in intercellular communication. Channel gating and ion conductance are likely regulated by membrane lipids rather than by membrane depolarization or extracellular calcium levels. This chain is Calcium homeostasis modulator protein 4, found in Homo sapiens (Human).